Here is a 99-residue protein sequence, read N- to C-terminus: Ubiquitin-related modifier 1 homolog (99 aa).

A 1-thioglycine modification is found at Gly99. A Glycyl lysine isopeptide (Gly-Lys) (interchain with K-? in acceptor proteins) cross-link involves residue Gly99.

It belongs to the URM1 family. Interacts with cer. In terms of processing, C-terminal thiocarboxylation occurs in 2 steps, it is first acyl-adenylated (-COAMP) via the hesA/moeB/thiF part of the MOCS3 homolog, then thiocarboxylated (-COSH) via the rhodanese domain of the MOCS3 homolog.

The protein localises to the cytoplasm. The protein operates within tRNA modification; 5-methoxycarbonylmethyl-2-thiouridine-tRNA biosynthesis. In terms of biological role, acts as a sulfur carrier required for 2-thiolation of mcm(5)S(2)U at tRNA wobble positions of cytosolic tRNA(Lys), tRNA(Glu) and tRNA(Gln). Serves as sulfur donor in tRNA 2-thiolation reaction by being thiocarboxylated (-COSH) at its C-terminus by MOCS3. The sulfur is then transferred to tRNA to form 2-thiolation of mcm(5)S(2)U. Also acts as a ubiquitin-like protein (UBL) that is covalently conjugated via an isopeptide bond to lysine residues of target proteins such as Prx2/Jafrac1, Ciao1, Eip71CD and GILT1. The thiocarboxylated form serves as substrate for conjugation and oxidative stress specifically induces the formation of UBL-protein conjugates. This chain is Ubiquitin-related modifier 1 homolog, found in Drosophila virilis (Fruit fly).